The sequence spans 190 residues: MNNNLPTGSSAAVVDLLNKENVIAYPTEAVFGVGCDPDSETAVTRLLALKQRPVDKGLILIAASFEQLKPYIDDSILTAAQRKAVFDCWPGPVTFVFPAPATTPRWLTGRFDSLAVRVTNHPLVVALCNAYGKPLVSTSANLSGLPPCRTVEEVRAQFGDDFPVVEGATGGRLNPSEIRDALTGELFRQG.

Residues 7 to 190 (TGSSAAVVDL…ALTGELFRQG (184 aa)) enclose the YrdC-like domain.

This sequence belongs to the SUA5 family. TsaC subfamily.

The protein resides in the cytoplasm. It carries out the reaction L-threonine + hydrogencarbonate + ATP = L-threonylcarbamoyladenylate + diphosphate + H2O. Its function is as follows. Required for the formation of a threonylcarbamoyl group on adenosine at position 37 (t(6)A37) in tRNAs that read codons beginning with adenine. Catalyzes the conversion of L-threonine, HCO(3)(-)/CO(2) and ATP to give threonylcarbamoyl-AMP (TC-AMP) as the acyladenylate intermediate, with the release of diphosphate. The chain is Threonylcarbamoyl-AMP synthase from Salmonella typhi.